Consider the following 678-residue polypeptide: NADPH--cytochrome P450 reductase (678 aa).

Glycine 2 bears the N-acetylglycine mark. The Lumenal portion of the chain corresponds to 2–22 (GDSNVDTGTTTSEMVAEEVSL). Residues 23–43 (FSATDMVLFSLIVGLLTYWFI) form a helical membrane-spanning segment. Residues 44–678 (FRKKKDEVPE…KGRYSLDVWS (635 aa)) are Cytoplasmic-facing. Serine 63 carries the phosphoserine modification. Residues 80–224 (IIVFYGSQTG…DFITWREQFW (145 aa)) enclose the Flavodoxin-like domain. FMN is bound by residues 86–91 (SQTGTA), 138–141 (ATYG), 173–182 (LGNKTYEHFN), and aspartate 208. An FAD-binding FR-type domain is found at 279 to 521 (KNPFLAVVTT…FVRKSQFRLP (243 aa)). Residue arginine 298 coordinates NADP(+). FAD contacts are provided by residues arginine 424, 454–457 (RYYS), 472–474 (CAV), tyrosine 478, and 488–491 (GVAT). Residues threonine 535, 596–597 (SR), 602–606 (KVYVQ), and aspartate 639 contribute to the NADP(+) site. Tryptophan 677 provides a ligand contact to FAD.

It belongs to the NADPH--cytochrome P450 reductase family. The protein in the N-terminal section; belongs to the flavodoxin family. This sequence in the C-terminal section; belongs to the flavoprotein pyridine nucleotide cytochrome reductase family. FAD is required as a cofactor. The cofactor is FMN.

The protein localises to the endoplasmic reticulum membrane. The enzyme catalyses 2 oxidized [cytochrome P450] + NADPH = 2 reduced [cytochrome P450] + NADP(+) + H(+). This enzyme is required for electron transfer from NADP to cytochrome P450 in microsomes. It can also provide electron transfer to heme oxygenase and cytochrome B5. The chain is NADPH--cytochrome P450 reductase from Sus scrofa (Pig).